The chain runs to 168 residues: Myelin basic protein (168 aa).

Residue Ala1 is modified to N-acetylalanine. 2 positions are modified to phosphoserine: Ser7 and Ser12. A Phosphotyrosine modification is found at Tyr14. Residue Thr17 is modified to Phosphothreonine. Ser19 carries the phosphoserine modification. The residue at position 20 (Thr20) is a Phosphothreonine. Citrulline is present on residues Arg25 and Arg31. At Thr35 the chain carries Phosphothreonine. Ser40 carries the phosphoserine modification. The interval 42 to 84 (GRFFSSDRGAPKRGSGKDHAARTTHYGSLPQKSGHRPQDENPV) is disordered. Residues Arg43 and Arg49 each carry the omega-N-methylarginine modification. An induces experimental autoimmune encephalomyelitis (EAE) region spans residues 45-86 (FSSDRGAPKRGSGKDHAARTTHYGSLPQKSGHRPQDENPVVH). Ser56 carries the post-translational modification Phosphoserine. At Thr65 the chain carries Phosphothreonine. Phosphotyrosine is present on Tyr67. The residue at position 74 (Ser74) is a Phosphoserine. Phosphothreonine occurs at positions 93 and 96. Gln101 is subject to Deamidated glutamine; partial. Arg105 carries the post-translational modification Omega-N-methylarginine; alternate. Residue Arg105 is modified to Symmetric dimethylarginine; alternate. Position 113 is a phosphoserine (Ser113). Residue Lys120 is modified to N6-acetyllysine. Citrulline is present on Arg128. Gln145 carries the deamidated glutamine modification. Citrulline is present on Arg157. Ser159 bears the Phosphoserine mark. Position 163 is a phosphoserine; by UHMK1 (Ser163). Citrulline is present on Arg168.

The protein belongs to the myelin basic protein family. Homodimer. Post-translationally, as in other animals, several charge isomers may be produced as a result of optional post-translational modifications, such as phosphorylation of serine or threonine residues, deamidation of glutamine or asparagine residues, citrullination and methylation of arginine residues. Phosphorylated by TAOK2, VRK2, MAPK11, MAPK12, MAPK14 and MINK1. In terms of processing, proteolytically cleaved in B cell lysosomes by cathepsin CTSG which degrades the major immunogenic MBP epitope and prevents the activation of MBP-specific autoreactive T cells. Found in both the central and the peripheral nervous system.

It localises to the myelin membrane. In terms of biological role, is, with PLP, the most abundant protein component of the myelin membrane in the CNS. Has a role in both the formation and stabilization of this compact multilayer arrangement of bilayers. Each splice variant and charge isomer may have a specialized function in the assembly of an optimized, biochemically functional myelin membrane. The protein is Myelin basic protein (MBP) of Oryctolagus cuniculus (Rabbit).